Here is a 204-residue protein sequence, read N- to C-terminus: Holliday junction branch migration complex subunit RuvA (204 aa).

The segment at 1-64 (MIGRLRGILL…EDAQLLYGFN (64 aa)) is domain I. Residues 65–143 (TVKERALFRE…GWSAGDLFTP (79 aa)) are domain II. Residues 144-155 (FTDAAPVDSGST) form a flexible linker region. The domain III stretch occupies residues 156–204 (SSNSAEEEAVSALLALGYKPVQASKVVSQIAKPDMTSEQLIREALKSMV).

It belongs to the RuvA family. As to quaternary structure, homotetramer. Forms an RuvA(8)-RuvB(12)-Holliday junction (HJ) complex. HJ DNA is sandwiched between 2 RuvA tetramers; dsDNA enters through RuvA and exits via RuvB. An RuvB hexamer assembles on each DNA strand where it exits the tetramer. Each RuvB hexamer is contacted by two RuvA subunits (via domain III) on 2 adjacent RuvB subunits; this complex drives branch migration. In the full resolvosome a probable DNA-RuvA(4)-RuvB(12)-RuvC(2) complex forms which resolves the HJ.

It is found in the cytoplasm. The RuvA-RuvB-RuvC complex processes Holliday junction (HJ) DNA during genetic recombination and DNA repair, while the RuvA-RuvB complex plays an important role in the rescue of blocked DNA replication forks via replication fork reversal (RFR). RuvA specifically binds to HJ cruciform DNA, conferring on it an open structure. The RuvB hexamer acts as an ATP-dependent pump, pulling dsDNA into and through the RuvAB complex. HJ branch migration allows RuvC to scan DNA until it finds its consensus sequence, where it cleaves and resolves the cruciform DNA. This Vibrio vulnificus (strain CMCP6) protein is Holliday junction branch migration complex subunit RuvA.